We begin with the raw amino-acid sequence, 369 residues long: DNA replication and repair protein RecF (369 aa).

30-37 (GENAQGKT) provides a ligand contact to ATP.

This sequence belongs to the RecF family.

It is found in the cytoplasm. Its function is as follows. The RecF protein is involved in DNA metabolism; it is required for DNA replication and normal SOS inducibility. RecF binds preferentially to single-stranded, linear DNA. It also seems to bind ATP. The polypeptide is DNA replication and repair protein RecF (Oceanobacillus iheyensis (strain DSM 14371 / CIP 107618 / JCM 11309 / KCTC 3954 / HTE831)).